The following is a 344-amino-acid chain: MTIANKPLTIAVLGAGAWGSALAIHLSRIGHQVKLWDHNPENAATLESARENVRYLKGVPFPDALSVQSDLKVTLADVDAVLMVVPSQAFREVLQKMHHIMMGSKSHYHLAWATKGFEPETSLMLHEIVQQELGEQISFAVLSGPTFAAEVARGLPTAMVSASRDQQEAQFWADAFHCDTFRMYTQSDVVGVEIGGAYKNIMAIATGLSDGLRLGANARAALIGRGMVEMMRFGDALGAKHETMMGLSGLGDLVLTCTDDLSRNRRFGLMLAQSQRPAEDVIEEIGQVVEGVKAVKAVKLIADKYQLDLPIMEQVYNIIVGQSTAEQAVKELMRRHGRSELEFG.

NADPH-binding residues include Trp18, His38, and Lys115. 3 residues coordinate sn-glycerol 3-phosphate: Lys115, Gly144, and Thr146. Residue Ala148 coordinates NADPH. Sn-glycerol 3-phosphate-binding residues include Lys199, Asp252, Ser262, Arg263, and Asn264. The active-site Proton acceptor is Lys199. Arg263 serves as a coordination point for NADPH. 2 residues coordinate NADPH: Val288 and Glu290.

The protein belongs to the NAD-dependent glycerol-3-phosphate dehydrogenase family.

The protein localises to the cytoplasm. The enzyme catalyses sn-glycerol 3-phosphate + NAD(+) = dihydroxyacetone phosphate + NADH + H(+). It carries out the reaction sn-glycerol 3-phosphate + NADP(+) = dihydroxyacetone phosphate + NADPH + H(+). The protein operates within membrane lipid metabolism; glycerophospholipid metabolism. In terms of biological role, catalyzes the reduction of the glycolytic intermediate dihydroxyacetone phosphate (DHAP) to sn-glycerol 3-phosphate (G3P), the key precursor for phospholipid synthesis. The polypeptide is Glycerol-3-phosphate dehydrogenase [NAD(P)+] (Hydrogenovibrio crunogenus (strain DSM 25203 / XCL-2) (Thiomicrospira crunogena)).